A 228-amino-acid polypeptide reads, in one-letter code: L-ribulose-5-phosphate 4-epimerase UlaF (228 aa).

Residues 26-27 (GN), 43-44 (SG), and 72-73 (SS) each bind substrate. Residues Asp74, His93, and His95 each coordinate Zn(2+). Asp118 (proton donor/acceptor) is an active-site residue. His167 contributes to the Zn(2+) binding site. The active-site Proton donor/acceptor is Tyr225.

It belongs to the aldolase class II family. AraD/FucA subfamily. It depends on Zn(2+) as a cofactor.

It catalyses the reaction L-ribulose 5-phosphate = D-xylulose 5-phosphate. It functions in the pathway cofactor degradation; L-ascorbate degradation; D-xylulose 5-phosphate from L-ascorbate: step 4/4. In terms of biological role, catalyzes the isomerization of L-ribulose 5-phosphate to D-xylulose 5-phosphate. Is involved in the anaerobic L-ascorbate utilization. The protein is L-ribulose-5-phosphate 4-epimerase UlaF of Shigella dysenteriae serotype 1 (strain Sd197).